The primary structure comprises 258 residues: Synaptosomal-associated protein 29 (258 aa).

The disordered stretch occupies residues 1–43 (MSAYPRSYNPFDEDAEDEDARPAPWSDSRDLADGPGAPADRQQ). Residues serine 65, serine 77, and serine 114 each carry the phosphoserine modification. Residues 76–107 (VSAEELVRQRGALERTEKMVDKMEQDLKTSQK) adopt a coiled-coil conformation. Disordered stretches follow at residues 127-147 (PAET…GRLK) and 161-188 (QASH…SSEA). Threonine 130 and threonine 137 each carry phosphothreonine. Polar residues predominate over residues 131-142 (PSAQNGTLTPQP). A phosphoserine mark is found at serine 163, serine 182, serine 185, serine 204, and serine 210. One can recognise a t-SNARE coiled-coil homology domain in the interval 196–258 (RACHQRIDSN…TSTERKVRQL (63 aa)).

The protein belongs to the SNAP-25 family. As to quaternary structure, forms a SNARE complex, composed of VAMP8, SNAP29 and STX17, involved in fusion of autophagosome with lysosome. Interacts with multiple syntaxins including STX6. Interacts with EIPR1. Interacts with STX17; this interaction is increased in the absence of TMEM39A.

It is found in the cytoplasm. Its subcellular location is the golgi apparatus membrane. It localises to the cytoplasmic vesicle. The protein resides in the autophagosome membrane. The protein localises to the cell projection. It is found in the cilium membrane. Functionally, SNAREs, soluble N-ethylmaleimide-sensitive factor-attachment protein receptors, are essential proteins for fusion of cellular membranes. SNAREs localized on opposing membranes assemble to form a trans-SNARE complex, an extended, parallel four alpha-helical bundle that drives membrane fusion. SNAP29 is a SNARE involved in autophagy through the direct control of autophagosome membrane fusion with the lysososome membrane. Also plays a role in ciliogenesis by regulating membrane fusions. The polypeptide is Synaptosomal-associated protein 29 (Bos taurus (Bovine)).